A 202-amino-acid polypeptide reads, in one-letter code: N-(5'-phosphoribosyl)anthranilate isomerase (202 aa).

This sequence belongs to the TrpF family.

It carries out the reaction N-(5-phospho-beta-D-ribosyl)anthranilate = 1-(2-carboxyphenylamino)-1-deoxy-D-ribulose 5-phosphate. Its pathway is amino-acid biosynthesis; L-tryptophan biosynthesis; L-tryptophan from chorismate: step 3/5. This chain is N-(5'-phosphoribosyl)anthranilate isomerase, found in Listeria welshimeri serovar 6b (strain ATCC 35897 / DSM 20650 / CCUG 15529 / CIP 8149 / NCTC 11857 / SLCC 5334 / V8).